A 528-amino-acid polypeptide reads, in one-letter code: Probable GTP-binding protein OBGM, mitochondrial (528 aa).

The N-terminal 45 residues, 1 to 45, are a transit peptide targeting the mitochondrion; that stretch reads MWRRQHALLRRISLPKPPAATGIGCYYATEPEGRKPKTAPLQSRG. Positions 46 to 339 constitute an Obg domain; it reads MVDRFRLRAK…TYLILELKSI (294 aa). 2 disordered regions span residues 52-87 and 167-212; these read LRAKGGDGGNGCISLRRSRSDRQGKPDGGNGGRGGD and HSPF…NHRG. Over residues 77–86 the composition is skewed to gly residues; it reads PDGGNGGRGG. Basic and acidic residues predominate over residues 197-207; that stretch reads NTAENDCERGN. The 174-residue stretch at 340-513 folds into the OBG-type G domain; the sequence is ADVGLVGMPN…LRVGLRDLMD (174 aa). GTP-binding positions include 346 to 353 and 393 to 397; these read GMPNAGKS and DIPGL.

It belongs to the TRAFAC class OBG-HflX-like GTPase superfamily. OBG GTPase family.

It localises to the mitochondrion. In terms of biological role, may bind GTP and have GTPase activity. The polypeptide is Probable GTP-binding protein OBGM, mitochondrial (OBGM) (Oryza sativa subsp. japonica (Rice)).